The sequence spans 231 residues: tRNA (guanine-N(1)-)-methyltransferase (231 aa).

S-adenosyl-L-methionine is bound by residues glycine 112 and 132 to 137; that span reads LGDFVL.

This sequence belongs to the RNA methyltransferase TrmD family. Homodimer.

The protein localises to the cytoplasm. The enzyme catalyses guanosine(37) in tRNA + S-adenosyl-L-methionine = N(1)-methylguanosine(37) in tRNA + S-adenosyl-L-homocysteine + H(+). In terms of biological role, specifically methylates guanosine-37 in various tRNAs. This chain is tRNA (guanine-N(1)-)-methyltransferase, found in Microcystis aeruginosa (strain NIES-843 / IAM M-2473).